We begin with the raw amino-acid sequence, 113 residues long: T cell receptor alpha variable 5 (113 aa).

The N-terminal stretch at 1 to 22 (MKTFAGFSFLFLWLQLDCMSRG) is a signal peptide. An Ig-like domain is found at 23-113 (EDVEQSLFLS…DSAIYFCAES (91 aa)). Asn-42 carries N-linked (GlcNAc...) asparagine glycosylation. Residues Cys-43 and Cys-110 are joined by a disulfide bond.

In terms of assembly, alpha-beta TR is a heterodimer composed of an alpha and beta chain; disulfide-linked. The alpha-beta TR is associated with the transmembrane signaling CD3 coreceptor proteins to form the TR-CD3 (TcR or TCR). The assembly of alpha-beta TR heterodimers with CD3 occurs in the endoplasmic reticulum where a single alpha-beta TR heterodimer associates with one CD3D-CD3E heterodimer, one CD3G-CD3E heterodimer and one CD247 homodimer forming a stable octameric structure. CD3D-CD3E and CD3G-CD3E heterodimers preferentially associate with TR alpha and TR beta chains, respectively. The association of the CD247 homodimer is the last step of TcR assembly in the endoplasmic reticulum and is required for transport to the cell surface.

It is found in the cell membrane. In terms of biological role, v region of the variable domain of T cell receptor (TR) alpha chain that participates in the antigen recognition. Alpha-beta T cell receptors are antigen specific receptors which are essential to the immune response and are present on the cell surface of T lymphocytes. Recognize peptide-major histocompatibility (MH) (pMH) complexes that are displayed by antigen presenting cells (APC), a prerequisite for efficient T cell adaptive immunity against pathogens. Binding of alpha-beta TR to pMH complex initiates TR-CD3 clustering on the cell surface and intracellular activation of LCK that phosphorylates the ITAM motifs of CD3G, CD3D, CD3E and CD247 enabling the recruitment of ZAP70. In turn ZAP70 phosphorylates LAT, which recruits numerous signaling molecules to form the LAT signalosome. The LAT signalosome propagates signal branching to three major signaling pathways, the calcium, the mitogen-activated protein kinase (MAPK) kinase and the nuclear factor NF-kappa-B (NF-kB) pathways, leading to the mobilization of transcription factors that are critical for gene expression and essential for T cell growth and differentiation. The T cell repertoire is generated in the thymus, by V-(D)-J rearrangement. This repertoire is then shaped by intrathymic selection events to generate a peripheral T cell pool of self-MH restricted, non-autoaggressive T cells. Post-thymic interaction of alpha-beta TR with the pMH complexes shapes TR structural and functional avidity. This Homo sapiens (Human) protein is T cell receptor alpha variable 5.